Reading from the N-terminus, the 549-residue chain is Chaperonin GroEL (549 aa).

ATP contacts are provided by residues 29–32 (TLGP), K50, 86–90 (DGTTT), G413, 479–481 (NAA), and D496. The segment at 522-549 (VSDKPEKPQQGGQGGGGMGGGDMGGMDF) is disordered. Over residues 532-549 (GGQGGGGMGGGDMGGMDF) the composition is skewed to gly residues.

Belongs to the chaperonin (HSP60) family. Forms a cylinder of 14 subunits composed of two heptameric rings stacked back-to-back. Interacts with the co-chaperonin GroES.

It is found in the cytoplasm. The catalysed reaction is ATP + H2O + a folded polypeptide = ADP + phosphate + an unfolded polypeptide.. Its function is as follows. Together with its co-chaperonin GroES, plays an essential role in assisting protein folding. The GroEL-GroES system forms a nano-cage that allows encapsulation of the non-native substrate proteins and provides a physical environment optimized to promote and accelerate protein folding. This Deinococcus deserti (strain DSM 17065 / CIP 109153 / LMG 22923 / VCD115) protein is Chaperonin GroEL.